The primary structure comprises 348 residues: GTPase Obg (348 aa).

The Obg domain occupies 1–159; sequence MKFLDQARIY…MTLWLRLKLI (159 aa). Residues 160–327 enclose the OBG-type G domain; the sequence is ADAGLVGLPN…TLQSLLAAID (168 aa). GTP is bound by residues 166-173, 191-195, 212-215, 279-282, and 308-310; these read GLPNAGKS, FTTLH, DIPG, SKID, and SAA. Residues serine 173 and threonine 193 each contribute to the Mg(2+) site.

This sequence belongs to the TRAFAC class OBG-HflX-like GTPase superfamily. OBG GTPase family. In terms of assembly, monomer. It depends on Mg(2+) as a cofactor.

The protein resides in the cytoplasm. An essential GTPase which binds GTP, GDP and possibly (p)ppGpp with moderate affinity, with high nucleotide exchange rates and a fairly low GTP hydrolysis rate. Plays a role in control of the cell cycle, stress response, ribosome biogenesis and in those bacteria that undergo differentiation, in morphogenesis control. This chain is GTPase Obg, found in Beijerinckia indica subsp. indica (strain ATCC 9039 / DSM 1715 / NCIMB 8712).